Here is a 154-residue protein sequence, read N- to C-terminus: 6,7-dimethyl-8-ribityllumazine synthase (154 aa).

5-amino-6-(D-ribitylamino)uracil is bound by residues Trp22, 56–58, and 80–82; these read AWE and CVI. Position 85–86 (85–86) interacts with (2S)-2-hydroxy-3-oxobutyl phosphate; that stretch reads DT. The Proton donor role is filled by His88. Asn113 provides a ligand contact to 5-amino-6-(D-ribitylamino)uracil. Arg127 contributes to the (2S)-2-hydroxy-3-oxobutyl phosphate binding site.

It belongs to the DMRL synthase family. Forms an icosahedral capsid composed of 60 subunits, arranged as a dodecamer of pentamers.

It catalyses the reaction (2S)-2-hydroxy-3-oxobutyl phosphate + 5-amino-6-(D-ribitylamino)uracil = 6,7-dimethyl-8-(1-D-ribityl)lumazine + phosphate + 2 H2O + H(+). It participates in cofactor biosynthesis; riboflavin biosynthesis; riboflavin from 2-hydroxy-3-oxobutyl phosphate and 5-amino-6-(D-ribitylamino)uracil: step 1/2. Functionally, catalyzes the formation of 6,7-dimethyl-8-ribityllumazine by condensation of 5-amino-6-(D-ribitylamino)uracil with 3,4-dihydroxy-2-butanone 4-phosphate. This is the penultimate step in the biosynthesis of riboflavin. The chain is 6,7-dimethyl-8-ribityllumazine synthase from Xanthomonas axonopodis pv. citri (strain 306).